A 185-amino-acid chain; its full sequence is Ribosome-recycling factor (185 aa).

Belongs to the RRF family.

The protein resides in the cytoplasm. Its function is as follows. Responsible for the release of ribosomes from messenger RNA at the termination of protein biosynthesis. May increase the efficiency of translation by recycling ribosomes from one round of translation to another. This Ehrlichia ruminantium (strain Gardel) protein is Ribosome-recycling factor.